The primary structure comprises 28 residues: Trypsin inhibitor A (28 aa).

Intrachain disulfides connect Cys3-Cys20, Cys10-Cys22, and Cys16-Cys27.

It belongs to the protease inhibitor I7 (squash-type serine protease inhibitor) family.

The protein localises to the secreted. Its function is as follows. Inhibits trypsin. This Momordica charantia (Bitter gourd) protein is Trypsin inhibitor A.